We begin with the raw amino-acid sequence, 343 residues long: RNA-binding protein 43 (343 aa).

An RRM domain is found at 15-90 (RTVVVSGLPV…PRLTVSHFSE (76 aa)).

The sequence is that of RNA-binding protein 43 (Rbm43) from Mus musculus (Mouse).